The primary structure comprises 572 residues: Proline--tRNA ligase (572 aa).

It belongs to the class-II aminoacyl-tRNA synthetase family. ProS type 1 subfamily. As to quaternary structure, homodimer.

The protein resides in the cytoplasm. The catalysed reaction is tRNA(Pro) + L-proline + ATP = L-prolyl-tRNA(Pro) + AMP + diphosphate. Functionally, catalyzes the attachment of proline to tRNA(Pro) in a two-step reaction: proline is first activated by ATP to form Pro-AMP and then transferred to the acceptor end of tRNA(Pro). As ProRS can inadvertently accommodate and process non-cognate amino acids such as alanine and cysteine, to avoid such errors it has two additional distinct editing activities against alanine. One activity is designated as 'pretransfer' editing and involves the tRNA(Pro)-independent hydrolysis of activated Ala-AMP. The other activity is designated 'posttransfer' editing and involves deacylation of mischarged Ala-tRNA(Pro). The misacylated Cys-tRNA(Pro) is not edited by ProRS. The sequence is that of Proline--tRNA ligase from Escherichia coli (strain K12 / MC4100 / BW2952).